The chain runs to 402 residues: Multidrug resistance protein MdtH (402 aa).

At 1-12 (MSRVSQARNLGK) the chain is on the cytoplasmic side. A helical membrane pass occupies residues 13-33 (YFLLIDNMLVVLGFFVVFPLI). Residues 34–98 (SIRFVDQMGW…GFATMGIAHE (65 aa)) are Periplasmic-facing. A helical transmembrane segment spans residues 99 to 116 (PWLLWFSCLLSGLGGTLF). Residues 117-138 (DPPRSALVVKLIRPQQRGRFFS) are Cytoplasmic-facing. A helical membrane pass occupies residues 139–159 (LLMMQDSASAVIGALLGSWLL). Residues 160–164 (QYDFR) lie on the Periplasmic side of the membrane. The helical transmembrane segment at 165-185 (LVCATGPVLFVLCAAFNAWLL) threads the bilayer. Residues 186–213 (PAWKLSTVRTPVREGMTRVMRDKRFVTY) are Cytoplasmic-facing. The helical transmembrane segment at 214–234 (VLTLAGYYMLAVQVMLMLPIM) threads the bilayer. Over 235-243 (VNDVAGAPS) the chain is Periplasmic. The helical transmembrane segment at 244 to 264 (AVKWMYAIEACLSLTLLYPIA) threads the bilayer. Over 265–276 (RWSEKHFRLEHR) the chain is Cytoplasmic. Residues 277-297 (LMAGLLIMSLSMMPVGMVSGL) traverse the membrane as a helical segment. Residues 298–299 (QQ) lie on the Periplasmic side of the membrane. Residues 300-320 (LFTLICLFYIGSIIAEPARET) form a helical membrane-spanning segment. At 321–339 (LSASLADARARGSYMGFSR) the chain is on the cytoplasmic side. The helical transmembrane segment at 340-360 (LGLAIGGAIGYIGGGWLFDLG) threads the bilayer. At 361 to 367 (KSAHQPE) the chain is on the periplasmic side. The chain crosses the membrane as a helical span at residues 368–388 (LPWMMLGIIGIFTFLALGWQF). The Cytoplasmic segment spans residues 389–402 (SQKRAARRLLERDA).

This sequence belongs to the major facilitator superfamily. DHA1 family. MdtH (TC 2.A.1.2.21) subfamily.

It is found in the cell inner membrane. The protein is Multidrug resistance protein MdtH of Shigella flexneri serotype 5b (strain 8401).